We begin with the raw amino-acid sequence, 230 residues long: 2,3-bisphosphoglycerate-dependent phosphoglycerate mutase (230 aa).

Residues R8–N15, T21–G22, R60, E87–Y90, K98, R114–R115, and G183–N184 each bind substrate. H9 acts as the Tele-phosphohistidine intermediate in catalysis. E87 acts as the Proton donor/acceptor in catalysis.

It belongs to the phosphoglycerate mutase family. BPG-dependent PGAM subfamily.

The catalysed reaction is (2R)-2-phosphoglycerate = (2R)-3-phosphoglycerate. Its pathway is carbohydrate degradation; glycolysis; pyruvate from D-glyceraldehyde 3-phosphate: step 3/5. Functionally, catalyzes the interconversion of 2-phosphoglycerate and 3-phosphoglycerate. This is 2,3-bisphosphoglycerate-dependent phosphoglycerate mutase from Streptococcus pneumoniae (strain P1031).